A 294-amino-acid polypeptide reads, in one-letter code: 4-hydroxybenzoate octaprenyltransferase (294 aa).

8 consecutive transmembrane segments (helical) span residues 24 to 44, 47 to 67, 99 to 119, 139 to 159, 164 to 184, 213 to 233, 238 to 258, and 274 to 294; these read IGIL…ADGF, LHLI…GCVI, LLAA…DPLV, FLAI…PMGF, GEVP…AVAY, VAAV…VGIA, PWFF…YTLI, and NWVG…FPAA.

Belongs to the UbiA prenyltransferase family. Requires Mg(2+) as cofactor.

The protein localises to the cell inner membrane. The catalysed reaction is all-trans-octaprenyl diphosphate + 4-hydroxybenzoate = 4-hydroxy-3-(all-trans-octaprenyl)benzoate + diphosphate. It participates in cofactor biosynthesis; ubiquinone biosynthesis. In terms of biological role, catalyzes the prenylation of para-hydroxybenzoate (PHB) with an all-trans polyprenyl group. Mediates the second step in the final reaction sequence of ubiquinone-8 (UQ-8) biosynthesis, which is the condensation of the polyisoprenoid side chain with PHB, generating the first membrane-bound Q intermediate 3-octaprenyl-4-hydroxybenzoate. This Aromatoleum aromaticum (strain DSM 19018 / LMG 30748 / EbN1) (Azoarcus sp. (strain EbN1)) protein is 4-hydroxybenzoate octaprenyltransferase.